The sequence spans 160 residues: Phosphopantetheine adenylyltransferase (160 aa).

Ser-10 serves as a coordination point for substrate. Residues 10–11 and His-18 contribute to the ATP site; that span reads SF. Residues Lys-42, Thr-74, and Arg-88 each coordinate substrate. ATP contacts are provided by residues 89 to 91, Glu-99, and 124 to 130; these read GLR and FYYISSR.

Belongs to the bacterial CoaD family. Homohexamer. Requires Mg(2+) as cofactor.

The protein resides in the cytoplasm. It carries out the reaction (R)-4'-phosphopantetheine + ATP + H(+) = 3'-dephospho-CoA + diphosphate. Its pathway is cofactor biosynthesis; coenzyme A biosynthesis; CoA from (R)-pantothenate: step 4/5. In terms of biological role, reversibly transfers an adenylyl group from ATP to 4'-phosphopantetheine, yielding dephospho-CoA (dPCoA) and pyrophosphate. The sequence is that of Phosphopantetheine adenylyltransferase from Bdellovibrio bacteriovorus (strain ATCC 15356 / DSM 50701 / NCIMB 9529 / HD100).